A 130-amino-acid chain; its full sequence is Glycoprotein hormone alpha-2 (130 aa).

A signal peptide spans 1–22; that stretch reads MPMAPRVLLFCLLGLAVTEGHG. 4 disulfide bridges follow: Cys32–Cys90, Cys49–Cys104, Cys58–Cys120, and Cys62–Cys122. N-linked (GlcNAc...) asparagine glycosylation is found at Asn38 and Asn82.

Belongs to the glycoprotein hormones subunit alpha family. In terms of assembly, heterodimer with GPHB5; this heterodimer interacts with thyroid-stimulating hormone receptor (TSHR), and hence stimulates cAMP production.

It is found in the secreted. In terms of biological role, functions as a heterodimeric glycoprotein hormone with GPHB5 able to bind and activate the thyroid-stimulating hormone receptor (TSHR), leading to increased cAMP production. Plays a central role in controlling thyroid cell metabolism. This chain is Glycoprotein hormone alpha-2 (Gpha2), found in Rattus norvegicus (Rat).